A 487-amino-acid polypeptide reads, in one-letter code: Protein nucleotidyltransferase YdiU (487 aa).

ATP contacts are provided by Gly-90, Gly-92, Arg-93, Lys-113, Asp-125, Gly-126, Arg-176, and Arg-183. The active-site Proton acceptor is Asp-252. Mg(2+)-binding residues include Asn-253 and Asp-262. Asp-262 serves as a coordination point for ATP.

Belongs to the SELO family. Requires Mg(2+) as cofactor. The cofactor is Mn(2+).

It catalyses the reaction L-seryl-[protein] + ATP = 3-O-(5'-adenylyl)-L-seryl-[protein] + diphosphate. The enzyme catalyses L-threonyl-[protein] + ATP = 3-O-(5'-adenylyl)-L-threonyl-[protein] + diphosphate. The catalysed reaction is L-tyrosyl-[protein] + ATP = O-(5'-adenylyl)-L-tyrosyl-[protein] + diphosphate. It carries out the reaction L-histidyl-[protein] + UTP = N(tele)-(5'-uridylyl)-L-histidyl-[protein] + diphosphate. It catalyses the reaction L-seryl-[protein] + UTP = O-(5'-uridylyl)-L-seryl-[protein] + diphosphate. The enzyme catalyses L-tyrosyl-[protein] + UTP = O-(5'-uridylyl)-L-tyrosyl-[protein] + diphosphate. In terms of biological role, nucleotidyltransferase involved in the post-translational modification of proteins. It can catalyze the addition of adenosine monophosphate (AMP) or uridine monophosphate (UMP) to a protein, resulting in modifications known as AMPylation and UMPylation. This is Protein nucleotidyltransferase YdiU from Pseudomonas savastanoi pv. phaseolicola (strain 1448A / Race 6) (Pseudomonas syringae pv. phaseolicola (strain 1448A / Race 6)).